Here is a 237-residue protein sequence, read N- to C-terminus: tRNA (guanine-N(7)-)-methyltransferase (237 aa).

E68, E93, D120, and D143 together coordinate S-adenosyl-L-methionine. D143 is an active-site residue. Substrate-binding positions include K147, D179, and 216–219 (TKFE).

This sequence belongs to the class I-like SAM-binding methyltransferase superfamily. TrmB family.

The catalysed reaction is guanosine(46) in tRNA + S-adenosyl-L-methionine = N(7)-methylguanosine(46) in tRNA + S-adenosyl-L-homocysteine. It functions in the pathway tRNA modification; N(7)-methylguanine-tRNA biosynthesis. Functionally, catalyzes the formation of N(7)-methylguanine at position 46 (m7G46) in tRNA. The chain is tRNA (guanine-N(7)-)-methyltransferase from Shewanella halifaxensis (strain HAW-EB4).